The sequence spans 707 residues: DNA topoisomerase 1 (707 aa).

The 140-residue stretch at 1 to 140 (MYAILAEKPS…IKRLWTSSMT (140 aa)) folds into the Toprim domain. A Topo IA-type catalytic domain is found at 157–596 (TLPLYYQAKA…HSKKLSSVLF (440 aa)). Positions 199–204 (SLGRVQ) are interaction with DNA. Tyr323 acts as the O-(5'-phospho-DNA)-tyrosine intermediate in catalysis.

The protein belongs to the type IA topoisomerase family. Monomer.

The catalysed reaction is ATP-independent breakage of single-stranded DNA, followed by passage and rejoining.. Functionally, releases the supercoiling and torsional tension of DNA, which is introduced during the DNA replication and transcription, by transiently cleaving and rejoining one strand of the DNA duplex. Introduces a single-strand break via transesterification at a target site in duplex DNA. The scissile phosphodiester is attacked by the catalytic tyrosine of the enzyme, resulting in the formation of a DNA-(5'-phosphotyrosyl)-enzyme intermediate and the expulsion of a 3'-OH DNA strand. The free DNA strand then undergoes passage around the unbroken strand, thus removing DNA supercoils. Finally, in the religation step, the DNA 3'-OH attacks the covalent intermediate to expel the active-site tyrosine and restore the DNA phosphodiester backbone. The polypeptide is DNA topoisomerase 1 (topA) (Alkalihalophilus pseudofirmus (strain ATCC BAA-2126 / JCM 17055 / OF4) (Bacillus pseudofirmus)).